A 422-amino-acid polypeptide reads, in one-letter code: MSFDINWNQLTIDDTINQSIKEFLDQQFKKISLPSFISNLSVTDFNLGEIPPEITIRHIGDPFEEFYEDEDNLGATNETNHNLNDERSTMGKSQENGIHKDNAYNSQNFDDDDDDDEGVDEDDDDDEYDDHDLGTINEGISLLNFNDSSTTPSGNSFGGSIAPLPPPPLNPSRDSFHSILHPYGVNSIIGATGAGSETPTNILNQNYLSSRVLPKISVKQKQPHHDDNDIQLIVEINYKGDMHINLLVNLLVNYPSPNFISLPIKLHITDIVIHSIATIAYLKKSVYLSFLCDVDDAFPDFDSNNNAQTPTSTTGGNFVDYYSNDAAINKERIDIVKKIKIESEIGEVENNILRNVGKVEKFLVEQLRNILRDEIAWPSWICIDMNDDGDDDDDDEVEDSNVSDGDGKDNDGKHGDGPTHEV.

Residues 1–386 enclose the SMP-LTD domain; sequence MSFDINWNQL…WPSWICIDMN (386 aa). 2 disordered regions span residues 74-134 and 387-422; these read GATN…HDLG and DDGD…THEV. 2 stretches are compositionally biased toward acidic residues: residues 109 to 130 and 387 to 401; these read FDDD…EYDD and DDGD…EDSN. Residues 405-422 are compositionally biased toward basic and acidic residues; that stretch reads GDGKDNDGKHGDGPTHEV.

The protein belongs to the MDM12 family. In terms of assembly, component of the ER-mitochondria encounter structure (ERMES) or MDM complex, composed of MMM1, MDM10, MDM12 and MDM34. An MMM1 homodimer associates with one molecule of MDM12 on each side in a pairwise head-to-tail manner, and the SMP-LTD domains of MMM1 and MDM12 generate a continuous hydrophobic tunnel for phospholipid trafficking.

It is found in the mitochondrion outer membrane. Its subcellular location is the endoplasmic reticulum membrane. Functionally, component of the ERMES/MDM complex, which serves as a molecular tether to connect the endoplasmic reticulum (ER) and mitochondria. Components of this complex are involved in the control of mitochondrial shape and protein biogenesis, and function in nonvesicular lipid trafficking between the ER and mitochondria. MDM12 is required for the interaction of the ER-resident membrane protein MMM1 and the outer mitochondrial membrane-resident beta-barrel protein MDM10. The MDM12-MMM1 subcomplex functions in the major beta-barrel assembly pathway that is responsible for biogenesis of all mitochondrial outer membrane beta-barrel proteins, and acts in a late step after the SAM complex. The MDM10-MDM12-MMM1 subcomplex further acts in the TOM40-specific pathway after the action of the MDM12-MMM1 complex. Essential for establishing and maintaining the structure of mitochondria and maintenance of mtDNA nucleoids. The chain is Mitochondrial distribution and morphology protein 12 from Candida dubliniensis (strain CD36 / ATCC MYA-646 / CBS 7987 / NCPF 3949 / NRRL Y-17841) (Yeast).